The sequence spans 242 residues: UPF0309 protein BOV_A0853 (242 aa).

Residues 30–209 (AADLIAAAAR…FADVAARLVG (180 aa)) form the SIS domain.

Belongs to the UPF0309 family.

The sequence is that of UPF0309 protein BOV_A0853 from Brucella ovis (strain ATCC 25840 / 63/290 / NCTC 10512).